A 296-amino-acid polypeptide reads, in one-letter code: MHALGRTLALMLLIFITILVPESSCSVKGREEIPPDDSFPFSDDNIFPDGVGVTMEIEIITPVSVQIGIKAQLFCHPSPSKEATLRIWEITPRDWPSCRLPYRAELQQISKKICTERGTTRVPAHHQSSDLPIKSMALKHDGHYSCRIETTDGIFQERHSIQVPGENRTVVCEAIASKPAMQILWTPDEDCVTKSKSHNDTMIVRSKCHREKNNGHSVFCFISHLTDNWILSMEQNRGTTSILPSLLSILYVKLAVTVLIVGFAFFQKRNYFSSRDLVFMKERRSKRSVWQREALG.

The first 25 residues, 1-25 (MHALGRTLALMLLIFITILVPESSC), serve as a signal peptide directing secretion. The Extracellular portion of the chain corresponds to 26–245 (SVKGREEIPP…NRGTTSILPS (220 aa)). Residues 48–162 (PDGVGVTMEI…GIFQERHSIQ (115 aa)) enclose the Ig-like V-type domain. C75 and C146 are joined by a disulfide. The Ig-like C2-type domain maps to 151–232 (TDGIFQERHS…SHLTDNWILS (82 aa)). N-linked (GlcNAc...) asparagine glycosylation is found at N167 and N199. Cysteines 172 and 220 form a disulfide. Residues 246–266 (LLSILYVKLAVTVLIVGFAFF) form a helical membrane-spanning segment. At 267–296 (QKRNYFSSRDLVFMKERRSKRSVWQREALG) the chain is on the cytoplasmic side.

Belongs to the CD200R family. As to quaternary structure, isoform 3 interacts with TYROBP. Isoform 8 does not interact with TYROBP. As to expression, expressed in uterus and bone marrow-derived mast cells (at protein level). Expressed in uterus, spleen, bone marrow-derived dendritic, basophil and mast cells. Expressed in the lung of N.brasiliensis-infected mice. Weakly expressed in brain, testis, lung and thymus.

It is found in the membrane. In terms of biological role, according to PubMed:15187158 isoform 4 is a receptor for the CD200 cell surface glycoprotein. According to PubMed:16081818 isoform 4 is not a receptor for the CD200/OX2 cell surface glycoprotein. Isoform 1, isoform 2 and isoform 3 are involved in the recruitment or surface expression of the TYROBP receptor. Isoform 6, isoform 7 and isoform 8 are not involved in the recruitment or surface expression of the TYROBP receptor. This chain is Cell surface glycoprotein CD200 receptor 3 (Cd200r3), found in Mus musculus (Mouse).